The sequence spans 74 residues: Large ribosomal subunit protein bL31 (74 aa).

The protein belongs to the bacterial ribosomal protein bL31 family. Type A subfamily. In terms of assembly, part of the 50S ribosomal subunit.

In terms of biological role, binds the 23S rRNA. The sequence is that of Large ribosomal subunit protein bL31 from Phenylobacterium zucineum (strain HLK1).